Here is a 273-residue protein sequence, read N- to C-terminus: Formamidopyrimidine-DNA glycosylase (273 aa).

The active-site Schiff-base intermediate with DNA is Pro-2. Glu-3 acts as the Proton donor in catalysis. Residue Lys-58 is the Proton donor; for beta-elimination activity of the active site. Residues His-91 and Arg-110 each coordinate DNA. An FPG-type zinc finger spans residues 238–272 (QVYGKTGQPCPRCGCLIKKIKVGGRGTHYCPRCQC). The active-site Proton donor; for delta-elimination activity is the Arg-262.

It belongs to the FPG family. In terms of assembly, monomer. Requires Zn(2+) as cofactor.

The catalysed reaction is Hydrolysis of DNA containing ring-opened 7-methylguanine residues, releasing 2,6-diamino-4-hydroxy-5-(N-methyl)formamidopyrimidine.. It catalyses the reaction 2'-deoxyribonucleotide-(2'-deoxyribose 5'-phosphate)-2'-deoxyribonucleotide-DNA = a 3'-end 2'-deoxyribonucleotide-(2,3-dehydro-2,3-deoxyribose 5'-phosphate)-DNA + a 5'-end 5'-phospho-2'-deoxyribonucleoside-DNA + H(+). Involved in base excision repair of DNA damaged by oxidation or by mutagenic agents. Acts as a DNA glycosylase that recognizes and removes damaged bases. Has a preference for oxidized purines, such as 7,8-dihydro-8-oxoguanine (8-oxoG). Has AP (apurinic/apyrimidinic) lyase activity and introduces nicks in the DNA strand. Cleaves the DNA backbone by beta-delta elimination to generate a single-strand break at the site of the removed base with both 3'- and 5'-phosphates. This chain is Formamidopyrimidine-DNA glycosylase, found in Streptococcus agalactiae serotype Ia (strain ATCC 27591 / A909 / CDC SS700).